A 199-amino-acid chain; its full sequence is Adenylyl-sulfate kinase (199 aa).

34-41 (GLSGSGKS) contacts ATP. Ser108 serves as the catalytic Phosphoserine intermediate.

The protein belongs to the APS kinase family.

It catalyses the reaction adenosine 5'-phosphosulfate + ATP = 3'-phosphoadenylyl sulfate + ADP + H(+). The protein operates within sulfur metabolism; hydrogen sulfide biosynthesis; sulfite from sulfate: step 2/3. In terms of biological role, catalyzes the synthesis of activated sulfate. This Oceanobacillus iheyensis (strain DSM 14371 / CIP 107618 / JCM 11309 / KCTC 3954 / HTE831) protein is Adenylyl-sulfate kinase.